The following is an 837-amino-acid chain: Probable aldehyde oxidase 4 (837 aa).

Positions 9 to 98 constitute a 2Fe-2S ferredoxin-type domain; the sequence is ERVVFELNGE…FCSIITTEGL (90 aa). [2Fe-2S] cluster-binding residues include Cys50, Cys55, Cys58, and Cys80. The region spanning 240–427 is the FAD-binding PCMH-type domain; it reads ISGPREGWYC…LSIFIPHWAS (188 aa).

It belongs to the xanthine dehydrogenase family. As to quaternary structure, aldehyde oxidases (AO) are homodimers and heterodimers of AO subunits. The cofactor is [2Fe-2S] cluster. FAD is required as a cofactor. It depends on Mo-molybdopterin as a cofactor.

It carries out the reaction an aldehyde + O2 + H2O = a carboxylate + H2O2 + H(+). This is Probable aldehyde oxidase 4 from Oryza sativa subsp. japonica (Rice).